The following is a 669-amino-acid chain: Dymeclin (669 aa).

A lipid anchor (N-myristoyl glycine) is attached at Gly2.

This sequence belongs to the dymeclin family. In terms of assembly, interacts with GOLM1 and PPIB. Post-translationally, myristoylated in vitro; myristoylation is not essential for protein targeting to Golgi compartment.

It is found in the cytoplasm. Its subcellular location is the golgi apparatus. The protein resides in the membrane. Necessary for correct organization of Golgi apparatus. Involved in bone development. This is Dymeclin (DYM) from Pongo abelii (Sumatran orangutan).